Here is a 467-residue protein sequence, read N- to C-terminus: uncharacterized protein (467 aa).

The segment at 1–60 (MVRVSRGCQSCVDAKLQSTPSPSPSKSPSPTESPEQCLQKRQSGEQVVLPSRPFPRTSPR) is disordered.

In terms of biological role, involved in osmoadaptation. This is an uncharacterized protein from Emericella nidulans (strain FGSC A4 / ATCC 38163 / CBS 112.46 / NRRL 194 / M139) (Aspergillus nidulans).